Consider the following 336-residue polypeptide: Acyl-CoA-binding domain-containing protein 4 (336 aa).

A helical; Signal-anchor transmembrane segment spans residues 12–32 (AVIGLLFAFLVAKLISTVIAF). The tract at residues 40–88 (TRSTPTSPSAADTPAAPAPPPASLDGGHGDTSDGSGSDSDSDWEGVEST) is disordered. Residues 42-54 (STPTSPSAADTPA) are compositionally biased toward low complexity. Over residues 78-88 (SDSDWEGVEST) the composition is skewed to acidic residues. Positions 90 to 178 (LDEEFSAASA…VDELFPNWSM (89 aa)) constitute an ACB domain. Residues 120 to 124 (YGLYK), lysine 142, lysine 146, and tyrosine 165 each bind an acyl-CoA. Asparagine 175 carries an N-linked (GlcNAc...) asparagine glycan. Positions 179–202 (GSSTKRKDEDTTVSASSSKGPMGP) are disordered. Residue asparagine 216 is glycosylated (N-linked (GlcNAc...) asparagine). 2 ANK repeats span residues 251–280 (EGRT…DVNA) and 284–313 (EGQT…DVQI).

Belongs to the ACBP family. As to expression, highly expressed in leaves. Expressed at low levels in roots and seeds.

It is found in the endoplasmic reticulum membrane. Functionally, binds medium- and long-chain acyl-CoA esters with high affinity. Can interact in vitro with palmitoyl-CoA, linoleoyl-CoA and linolenoyl-CoA. Binds phosphatidic acid (PA) and phosphatidylcholine (PC) in vitro. May play a role in the biosynthesis of phospholipids. This Oryza sativa subsp. japonica (Rice) protein is Acyl-CoA-binding domain-containing protein 4.